The following is a 73-amino-acid chain: Large ribosomal subunit protein bL31 (73 aa).

The protein belongs to the bacterial ribosomal protein bL31 family. Type A subfamily. Part of the 50S ribosomal subunit.

Binds the 23S rRNA. This is Large ribosomal subunit protein bL31 from Dinoroseobacter shibae (strain DSM 16493 / NCIMB 14021 / DFL 12).